The following is a 216-amino-acid chain: Adenylate kinase (216 aa).

10-15 (GAGKGT) provides a ligand contact to ATP. Residues 30-59 (STGDMLRAAVKAGTPLGLELKKVMDAGQLV) are NMP. Residues Thr31, Arg36, 57–59 (QLV), 85–88 (GFPR), and Gln92 each bind AMP. Residues 122-159 (GRRVHLASGRTYHIQYNPPKVEGKDDVTGEDLIQRDDD) are LID. ATP contacts are provided by residues Arg123 and 132-133 (TY). 2 residues coordinate AMP: Arg156 and Arg167. Residue Gly202 participates in ATP binding.

The protein belongs to the adenylate kinase family. As to quaternary structure, monomer.

Its subcellular location is the cytoplasm. The enzyme catalyses AMP + ATP = 2 ADP. It participates in purine metabolism; AMP biosynthesis via salvage pathway; AMP from ADP: step 1/1. In terms of biological role, catalyzes the reversible transfer of the terminal phosphate group between ATP and AMP. Plays an important role in cellular energy homeostasis and in adenine nucleotide metabolism. The sequence is that of Adenylate kinase from Pseudomonas putida (strain GB-1).